Reading from the N-terminus, the 623-residue chain is AM-toxin biosynthesis protein 12-2 (623 aa).

The interval 110-129 (TIPGTSQAKNTEPDHQASGL) is disordered.

It participates in mycotoxin biosynthesis. Functionally, part of the gene clusters that mediate the biosynthesis of AM-toxins, host-selective toxins (HSTs) causing Alternaria blotch on apple, a worldwide distributed disease. AM-toxins are cyclic depsipeptides containing the 3 residues 2-hydroxy-isovaleric acid (2-HIV), dehydroalanine, L-alanine which are common for all 3 AM-toxins I to III. The fourth precursor is L-alpha-amino-methoxyphenyl-valeric acid (L-Amv) for AM-toxin I, L-alpha-amino-phenyl-valeric acid (L-Apv) for AM-toxin II, and L-alpha-amino-hydroxyphenyl-valeric acid (L-Ahv) for AM-toxin III. AM-toxins have two target sites for affecting susceptible apple cells; they cause invagination of the plasma membrane and electrolyte loss and chloroplast disorganization. The non-ribosomal peptide synthetase AMT1 contains 4 catalytic modules and is responsible for activation of each residue in AM-toxin. The aldo-keto reductase AMT2 catalyzes the conversion of 2-keto-isovaleric acid (2-KIV) to 2-hydroxy-isovaleric acid (2-HIV), one of the precursor residues incorporated by AMT1 during AM-toxin biosynthesis, by reduction of its ketone to an alcohol. The cytochrome P450 monooxygenase AMT3 and the thioesterase AMT4 are also important for AM-toxin production, but their exact function within the AM-toxin biosynthesis are not known yet. Up to 21 proteins (including AMT1 to AMT4) are predicted to be involved in AM-toxin biosynthesis since their expression ishighly up-regulated in AM-toxin-producing cultures. This Alternaria alternata (Alternaria rot fungus) protein is AM-toxin biosynthesis protein 12-2.